The following is a 674-amino-acid chain: Nucleoporin NDC1 (674 aa).

Over 1-24 (MATAVSRPCAGRSRDILWRVLGWR) the chain is Cytoplasmic. The chain crosses the membrane as a helical span at residues 25–45 (IVASIVWSVLFLPICTTVFII). Over 46-68 (FSRIDLFHPIQWLSDSFSDLYSS) the chain is Perinuclear space. A helical transmembrane segment spans residues 69–89 (YVIFYFLLLSVVIIIISIFNV). Residues 90-114 (EFYAVVPSIPCSRLALIGKIIHPQQ) are Cytoplasmic-facing. The helical transmembrane segment at 115–135 (LMHSFIHAAMGMVMAWCAAVI) threads the bilayer. Over 136 to 165 (TQGQYSFLVVPCTGTNSFGSPAAQTCLNEY) the chain is Perinuclear space. A helical membrane pass occupies residues 166–186 (HLFFLLTGAFMGYSYSLLYFV). Topologically, residues 187–225 (NNMNYLPFPIIQQYKFLRFRRSLLLLVKHSCVESLFLVR) are cytoplasmic. The helical transmembrane segment at 226 to 246 (NFCILYYFLGYIPKAWISTAM) threads the bilayer. Topologically, residues 247–272 (NLHIDEQVHRPLDTVSGLLNLSLLYH) are perinuclear space. Residues 273 to 293 (VWLCGVFLLTTWYVSWILFKI) traverse the membrane as a helical segment. Residues 294-674 (YATEAHVFPV…RLQQFLEFKE (381 aa)) are Cytoplasmic-facing. A disordered region spans residues 394–425 (SSSYPVEPKKLNSPEETAFQTPKSSQMPRPSV). Ser406 is subject to Phosphoserine. Residues 407 to 421 (PEETAFQTPKSSQMP) show a composition bias toward polar residues. Thr414 carries the phosphothreonine modification. Ser439 is modified (phosphoserine). At Thr440 the chain carries Phosphothreonine. Residue Ser445 is modified to Phosphoserine. Thr449 carries the post-translational modification Phosphothreonine. Ser471 and Ser474 each carry phosphoserine.

This sequence belongs to the NDC1 family. In terms of assembly, interacts with the NUP35/NUP53. Interacts with AAAS, anchoring it to the nuclear envelope.

The protein resides in the nucleus. It is found in the nuclear pore complex. The protein localises to the nucleus membrane. Component of the nuclear pore complex (NPC), which plays a key role in de novo assembly and insertion of NPC in the nuclear envelope. Required for NPC and nuclear envelope assembly, possibly by forming a link between the nuclear envelope membrane and soluble nucleoporins, thereby anchoring the NPC in the membrane. This Homo sapiens (Human) protein is Nucleoporin NDC1 (NDC1).